We begin with the raw amino-acid sequence, 547 residues long: Chaperonin GroEL (547 aa).

ATP-binding positions include 30-33 (TLGP), Lys-51, 87-91 (DGTTT), Gly-415, and Asp-496.

This sequence belongs to the chaperonin (HSP60) family. In terms of assembly, forms a cylinder of 14 subunits composed of two heptameric rings stacked back-to-back. Interacts with the co-chaperonin GroES.

Its subcellular location is the cytoplasm. It catalyses the reaction ATP + H2O + a folded polypeptide = ADP + phosphate + an unfolded polypeptide.. Functionally, together with its co-chaperonin GroES, plays an essential role in assisting protein folding. The GroEL-GroES system forms a nano-cage that allows encapsulation of the non-native substrate proteins and provides a physical environment optimized to promote and accelerate protein folding. The chain is Chaperonin GroEL from Pelodictyon phaeoclathratiforme (strain DSM 5477 / BU-1).